The following is a 2737-amino-acid chain: MTHTTGPTKASGESTIFLFGPHVGTFTKQSMNKLVHPLSQSPQRDWILDTIAELPGYWDALAAKMPDVARDIDGSRSLAELDSWLRHGSANLGEDDSNLPSIIVGPLVVFIQLTQYWRHLELTKAGTQATDLQADLVAMHSNQTGDKVEILGFCAGLLAALAVASSNNRQEFQKYGAVAVRLAMLIGALIDAQEVWDKASGKGSSSSYAVAWRGPKQEEDMTRIIDDLAANAYIAVRYDQTRATVTASETIAPLLLKRFRAAGITVAEVGIKGQIHSPNPDRRAHTNALVDLCNSLPGLQYAAAERLALQTYDNQGDGKPLLPDRGSLTEMVLRSILVQQCHWYDTFSAVTERHQDPYVVTFGLERCVPPTLMRSLGGRQVFFEDLPKDPSHPSSWMPNAPHGPQQQLQQRQLPVEVHTKPAFDVSNEAIAIVGMSVKTAGADDLAEFAEMLKTGQSQHIPITRDRLMHDMLFRESADSDPKRKYYGCFFRDGDAFDHKFFKRSPREAAAMDPQSRIVLQTAYQAIEQSGYFAEDHTGYTPDGRDKAHVGVYLGSCGVDYEHNISCHDPNAFTATGALKSFITGRVSHLFGWTGPCMTFDTACSSSAVAIHTACRNLLSGECTAALAGGSNTVTNMNWFQNLAAGSFVSPTGQCKPFDDDADGYCRAEGAAFVFLKRLSDAVRDGNPILATIASSAVYQNQNCTPLFVPNSPSLSHLFKDVMHQAKITANDVSLVEAHGTGTPVGDPAEYESIRVALGGPIRKKTLPIGSVKGHIGHTEGASGAIALVKIIMMMREGFIPPQASFKKMNRKIPVRADDNMEVVTKLRPWDEPHKTALLNNYGACGSNASMIITEPDKALSGPIDGSRYRNTGQRYPFWIPGFDSRAITAYCAKLGSWLRSCRQEPTLADVSFNVNRQSNRSLTQGFIFNCRSMTELHEKLEQAAAAGKDAAANAGITPVKAERPVVLCFGGQVSRFVGLDRNLFESVAILRQHLDHVDAVVTSQGLGSIYPEIFEREPVRDTVKLQTMLFALQYACAKSWMDSGLQGKVQAVVGHSFGEITALCIAGVLSLEHTVQLVAARAALVRDNWGADPGAMMAIEADENLVNELLLEANRGSDGSASIACYNGPRSFTIAGSTGAIDAVQQTMGSNSKFGSIKSKRLSVTNAFHSALVDKISDGLERIGKTLTFHRPIIPVERATEMPFDMDNLDGSFVSQHMRQPVYFNHALQRLVKRYPQAIFLEAGSSSTITIMASRAIAQSQASSSDAHHFQAMSITSDTAFDSLTDATMALWKQGLRVSFWAHHAVQARDYAQLLLPPYQFDTSSRHWLPMKSPLEEVKKAAAAMVAAGGDVGTGQHQQNDALQDPRLQSLWNFVEFQDGDNKKPRFRINTGSDKYNRFVLSHVIAQTAPICPGTLECDIVIEALFSLEPTWKQEGVQPVVRDMINHSPICKDPSRTVYLDLTALNKKRTQWTVRIFSVDSNSSRQASETHAEASVEMRAPTDAAHLREFANFERLVSHQQCLDVLRLNLDEEGVEVLQGRNVYRAFNPIVDYGDVYRGVRYVVGRGNECAGSVQLPKCHRGDTWLDVPLSDSFSQVGGIWVNLLTDLPPSDMYIATGCGLSMRSPTAPPRADTDVWHVYARHSRQGDKAFMTDLFVFDPATGQLVELMLGVQYGRVAKASMSMMLARMTKDESVLRTKTPSSSHPAPTVKSVPIEASVAVKASRTTKKKAKASKSKSSVKKDKAPSGWRDITDEVRNLVATVSGIEASELELDSEMADFGIDSLMGMELGKEVETAFKCTLDQNEQMEATTLRKFVACVSNALFGPNQGQSSIDEDDEDDEHSEDSSNESSSAASDEDASSGLESPDTGILTPEDEPLPLKAVAIHKAAGLAAIAPPVESHLALSASDILESFGEVKMTTDRLMHEYGVHKTEKVMLAGSNRLCAALVVEAFDELGSPLRTAAAGQVIDRVPFLPQHGRLMQWVYEFLERDARLIDIDVTSGQITRTHIAPPRKTSHAILQELLASDPDFAVPNRLAYYAGKQLAGVLSGSTDGIRVLFGSPEGRELTAAMYCEHTFNCMSYAQMREVTKILADRIQSSSGSSGETFKVLEMGAGTGGTTLVMAPLLASLSDMGMAVEYTFTDISPSMVANARRRFSKLYPFMRFSVHDIEKAPADELKGQHLVLASNAIHATHNLGVSLSNIHQALRPDGFLMMLEMTEVVPFVDLVFGLLEGWWLFDDGRSHAVVPAEHWERELHAAGFGHVDWTDGSLPENAFQKVIIALASGTQGPRLPKPASVPEPIPELNPKSIETRTAHAEQLTATYSKGWATPKLRALDAKSEEGQVKPSGTSRLRKVDLGAVVLVTGATGSLGSHLVQKLADDPNVAQVVCLNRRSNSMPADKRQQEALATRGITLSPGGRAKLRILETDTSKAQLGLPPLEYSWLVEHGTDIVHNAWPMSGTRPVSAFEPQLQAMRNLLDLARDMACRDINPPSRVGFQFVSSIGVVGFVGESRVTERRVPLSATLPSGYGEAKWVCERMLDETLHKYPRLFRPMVVRPGQISGSSTSGFWNPVEHFAFLVKSAQALRAWPDLDGVLQWIPVNFCAGIIVDLLKIASRADDAYPVYHIDNPVGQPWKAMNPVLASALDIPPHAIIPFKDWISRVRRSPLPLETENPAARLVDFLDDHFERMSCGGLVLDTSKALEHSQTMATVGPVSSDVARLYVASWKKMGYLHS.

The tract at residues 75-245 (SRSLAELDSW…VRYDQTRATV (171 aa)) is N-terminal acylcarrier protein transacylase domain (SAT). C154 functions as the Nucleophile; for transacylase activity in the catalytic mechanism. H276 acts as the Proton donor/acceptor; for transacylase activity in catalysis. Residues 427 to 854 (NEAIAIVGMS…GSNASMIITE (428 aa)) form the Ketosynthase family 3 (KS3) domain. Residues C603, H738, and H777 each act as for beta-ketoacyl synthase activity in the active site. Residues 969-1260 (FGGQVSRFVG…IMASRAIAQS (292 aa)) form a malonyl-CoA:ACP transacylase (MAT) region. The tract at residues 1368–1503 (LQSLWNFVEF…ASVEMRAPTD (136 aa)) is N-terminal hotdog fold. Residues 1368 to 1683 (LQSLWNFVEF…YGRVAKASMS (316 aa)) form the PKS/mFAS DH domain. The interval 1399–1681 (FVLSHVIAQT…VQYGRVAKAS (283 aa)) is product template (PT) domain. Catalysis depends on H1403, which acts as the Proton acceptor; for dehydratase activity. Positions 1535 to 1683 (VEVLQGRNVY…YGRVAKASMS (149 aa)) are C-terminal hotdog fold. D1592 (proton donor; for dehydratase activity) is an active-site residue. The interval 1724 to 1747 (SRTTKKKAKASKSKSSVKKDKAPS) is disordered. Residues 1725 to 1739 (RTTKKKAKASKSKSS) are compositionally biased toward basic residues. In terms of domain architecture, Carrier spans 1750–1824 (RDITDEVRNL…KFVACVSNAL (75 aa)). The residue at position 1784 (S1784) is an O-(pantetheine 4'-phosphoryl)serine. The tract at residues 1827–1876 (PNQGQSSIDEDDEDDEHSEDSSNESSSAASDEDASSGLESPDTGILTPED) is disordered. Acidic residues predominate over residues 1834–1848 (IDEDDEDDEHSEDSS). Positions 1849-1866 (NESSSAASDEDASSGLES) are enriched in low complexity. Positions 2094–2270 (ADRIQSSSGS…GFGHVDWTDG (177 aa)) are methyltransferase domain. An NADPH-binding domain region spans residues 2362–2665 (VVLVTGATGS…IPFKDWISRV (304 aa)).

It functions in the pathway secondary metabolite biosynthesis. Its function is as follows. Non-reducing polyketide synthase; part of the cluster B that mediates the biosynthesis of azasperpyranones, members of the azaphilone family that exhibit anti-cancer activities. Azasperpyranones are synthesized by 2 clusters, A and B. Cluster A is responsible for the production of the polyhydric phenol moiety while the azaphilonoid scaffold is produced by the cluster B. The non-reducing polyketide synthase ATEG_03629 produces 5-methyl orsellinic acid, which is then reduced to 5-methyl orsellinic aldehyde by the NRPS-like protein ATEG_03630. 5-methyl orsellinic aldehyde is then first hydroxylated by the FAD-dependent monooxygenase ATEG_03635 and subsequently hydroxylated by the cytochrome P450 monooxygenase ATEG_03631 to produce the unstable polyhydric phenol precursor of azasperpyranones. On the other hand, the polyketide synthase ATEG_07659 is responsible for producing the 3,5-dimethyloctadienone moiety from acetyl-CoA, three malonyl-CoA, and two S-adenosyl methionines (SAM). The 3,5-dimethyloctadienone moiety is then loaded onto the SAT domain of ATEG_07661 and extended with four malonyl-CoA and one SAM, which leads to the formation of 2,4-dihydroxy-6-(5,7-dimethyl-2-oxo-trans-3-trans-5-nonadienyl)-3-methylbenzaldehyde (compound 8) after reductive release and aldol condensation. The FAD-dependent monooxygenase ATEG_07662 is the next enzyme in the biosynthesis sequence and hydroxylates the side chain at the benzylic position of compound 8. In Aspergillus nidulans, afoF, the ortholog of the FAD-dependent oxygenase ATEG_07660, is the key enzyme for the biosynthesis of asperfuranone by catalyzing the hydroxylation at C-8 of to prevent the formation of a six-membered ring hemiacetal intermediate and thus facilitating the formation of a five-membered ring to produce asperfuranone. In Aspergillus terreus, ATEG_07660 is probably not functional, which leads to the formation of the six-membered ring hemiacetal intermediate presperpyranone instead of asperfuranone. Finally, ATEG_03636 is involved in the condensation of the polyhydric phenol moiety produced by cluster A and the perasperpyranone precursor produced by cluster B, to yield azasperpyranone A. Further modifications of azasperpyranone A result in the production of derivatives, including azasperpyranone B to F. The protein is Non-reducing polyketide synthase ATEG_07661 of Aspergillus terreus (strain NIH 2624 / FGSC A1156).